The chain runs to 157 residues: 2-C-methyl-D-erythritol 2,4-cyclodiphosphate synthase (157 aa).

A divalent metal cation-binding residues include aspartate 8 and histidine 10. Residues 8-10 (DVH) and 34-35 (HS) contribute to the 4-CDP-2-C-methyl-D-erythritol 2-phosphate site. Histidine 42 is an a divalent metal cation binding site. 4-CDP-2-C-methyl-D-erythritol 2-phosphate is bound by residues 56–58 (DLG), 61–65 (FPDTD), 132–135 (TTTE), phenylalanine 139, and arginine 142.

It belongs to the IspF family. In terms of assembly, homotrimer. A divalent metal cation is required as a cofactor.

The enzyme catalyses 4-CDP-2-C-methyl-D-erythritol 2-phosphate = 2-C-methyl-D-erythritol 2,4-cyclic diphosphate + CMP. It functions in the pathway isoprenoid biosynthesis; isopentenyl diphosphate biosynthesis via DXP pathway; isopentenyl diphosphate from 1-deoxy-D-xylulose 5-phosphate: step 4/6. Its function is as follows. Involved in the biosynthesis of isopentenyl diphosphate (IPP) and dimethylallyl diphosphate (DMAPP), two major building blocks of isoprenoid compounds. Catalyzes the conversion of 4-diphosphocytidyl-2-C-methyl-D-erythritol 2-phosphate (CDP-ME2P) to 2-C-methyl-D-erythritol 2,4-cyclodiphosphate (ME-CPP) with a corresponding release of cytidine 5-monophosphate (CMP). The polypeptide is 2-C-methyl-D-erythritol 2,4-cyclodiphosphate synthase (Salinibacter ruber (strain DSM 13855 / M31)).